Reading from the N-terminus, the 693-residue chain is Elongation factor G 1 (693 aa).

The tr-type G domain maps to 4 to 281; the sequence is NKLRNIGISA…AVTRFLPSPH (278 aa). GTP-binding positions include 13 to 20, 80 to 84, and 134 to 137; these read AHIDSGKT, DTPGH, and NKCD.

It belongs to the TRAFAC class translation factor GTPase superfamily. Classic translation factor GTPase family. EF-G/EF-2 subfamily.

Its subcellular location is the cytoplasm. In terms of biological role, catalyzes the GTP-dependent ribosomal translocation step during translation elongation. During this step, the ribosome changes from the pre-translocational (PRE) to the post-translocational (POST) state as the newly formed A-site-bound peptidyl-tRNA and P-site-bound deacylated tRNA move to the P and E sites, respectively. Catalyzes the coordinated movement of the two tRNA molecules, the mRNA and conformational changes in the ribosome. This Borrelia garinii subsp. bavariensis (strain ATCC BAA-2496 / DSM 23469 / PBi) (Borreliella bavariensis) protein is Elongation factor G 1.